The chain runs to 901 residues: MLIPSKLSRPVRLDHTVVRERLLAKLSGANNFRLALITSPAGYGKTTLISQWAAGKNDIGWYSLDEGDNQQERFASYLIAAVQQATNGHCAICETMAQKRQYASLTSLFAQLFIELAEWHSPLYLVIDDYHLITNPVIHESMRFFIRHQPENLTLVVLSRNLPQLGIANLRVRDQLLEIGSQQLAFTHQEAKQFFDCRLSSPIEAAESSRICDDVSGWATALQLIALSARQNTHSAHKSARRLAGINASHLSDYLVDEVLDNVDLATRHFLLKSAILRSMNDALITRVTGEENGQMRLEEIERQGLFLQRMDDTGEWFCYHPLFGNFLRQRCQWELAAELPEIHRAAAESWMAQGFPSEAIHHALAAGDALMLRDILLNHAWSLFNHSELSLLEESLKALPWDSLLENPQLVLLQAWLMQSQHRYGEVNTLLARAEHEIKDIREGTMHAEFNALRAQVAINDGNPDEAERLAKLALEELPPGWFYSRIVATSVLGEVLHCKGELTRSLALMQQTEQMARQHDVWHYALWSLIQQSEILFAQGFLQTAWETQEKAFQLINEQHLEQLPMHEFLVRIRAQLLWAWARLDEAEASARSGIEVLSSYQPQQQLQCLAMLIQCSLARGDLDNARSQLNRLENLLGNGKYHSDWISNANKVRVIYWQMTGDKAAAANWLRHTAKPEFANNHFLQGQWRNIARAQILLGEFEPAEIVLEELNENARSLRLMSDLNRNLLLLNQLYWQAGRKSDAQRVLLDALKLANRTGFISHFVIEGEAMAQQLRQLIQLNTLPELEQHRAQRILREINQHHRHKFAHFDENFVERLLNHPEVPELIRTSPLTQREWQVLGLIYSGYSNEQIAGELEVAATTIKTHIRNLYQKLGVAHRQAAVQHAQKLLKMMGYGV.

Position 39 to 46 (39 to 46 (SPAGYGKT)) interacts with ATP. The 66-residue stretch at 829 to 894 (ELIRTSPLTQ…AAVQHAQKLL (66 aa)) folds into the HTH luxR-type domain. A DNA-binding region (H-T-H motif) is located at residues 853 to 872 (NEQIAGELEVAATTIKTHIR).

This sequence belongs to the MalT family. As to quaternary structure, monomer in solution. Oligomerizes to an active state in the presence of the positive effectors ATP and maltotriose.

Its activity is regulated as follows. Activated by ATP and maltotriose, which are both required for DNA binding. In terms of biological role, positively regulates the transcription of the maltose regulon whose gene products are responsible for uptake and catabolism of malto-oligosaccharides. Specifically binds to the promoter region of its target genes, recognizing a short DNA motif called the MalT box. This Escherichia coli (strain 55989 / EAEC) protein is HTH-type transcriptional regulator MalT.